Here is a 293-residue protein sequence, read N- to C-terminus: Dioxygenase cdmA (293 aa).

Histidine 135, aspartate 137, and histidine 212 together coordinate Fe cation.

The protein belongs to the PhyH family. In terms of assembly, homodimer. The cofactor is Fe cation.

The enzyme catalyses chrodrimanin C + 2-oxoglutarate + O2 = verruculide A + succinate + CO2 + H2O. It carries out the reaction chrodrimanin H + 2-oxoglutarate + O2 = chrodrimanin E + succinate + CO2 + H2O. Its pathway is secondary metabolite biosynthesis; terpenoid biosynthesis. Its function is as follows. Dioxygenase; part of the gene cluster that mediates the biosynthesis of chrodrimanin B, a meroterpenoid that acts as a potent blocker of insect GABA-gated chloride channels. The first step of the pathway is the biosynthesis of 6-hydroxymellein by the polyketide synthase cdmE. The prenyltransferase cdmH acts as a 6-hydroxymellein 5-farnesyltransferase and produces the hydrophobic metabolite verruculide C. The FAD-dependent monooxygenase cdmI further converts verruculide C into verruculide B. The terpene cyclase cdmG then produced the pentacyclic molecule 3-hydroxypentacecilide A, the backbone structure of chrodrimanin B, via folding the farnesyl moiety of the substrate into the chair-boat conformation. The short-chain dehydrogenase/reductase cdmF functions as the 3-OH dehydrogenase that oxidizes the C-3 hydroxyl group of 3-hydroxypentacecilide A and produces chrodrimanin C, the dehydrogenated product of 3-hydroxypentacecilide A. The cytochrome P450 monooxygenase cdmJ then accepts both 3-hydroxypentacecilide A and chrodrimanin C and functions as a C-7-beta-hydroxylase to produce respectively chrodrimanin H and chrodrimanin F. The dioxygenase cdmA accepts chrodrimanin H to afford chrodrimanin E, which is further transformed to chrodrimanin A by the dioxygenase cdmD. CdmA can also accept chrodrimanin C as substrate to convert it into verruculide A, which is further converted into chrodrimanin T by cdmD. The last step of the biosynthesis is proposed to be performed by the acetyltransferase cdmC which acetylates chrodrimanin A to yield chrodrimanin B. The pathway may also lead to the production of additional shunt products, including chrodrimanins T and U. The protein is Dioxygenase cdmA of Talaromyces verruculosus (Penicillium verruculosum).